Consider the following 409-residue polypeptide: Tyrosine--tRNA ligase (409 aa).

A 'HIGH' region motif is present at residues 54 to 63; sequence PTAPDIHLGH. Positions 238 to 242 match the 'KMSKS' region motif; that stretch reads KMSKS. K241 lines the ATP pocket. One can recognise an S4 RNA-binding domain in the interval 347–407; it reads MGILHVLRAS…GKRKFARVNL (61 aa).

It belongs to the class-I aminoacyl-tRNA synthetase family. TyrS type 2 subfamily. As to quaternary structure, homodimer.

It localises to the cytoplasm. The enzyme catalyses tRNA(Tyr) + L-tyrosine + ATP = L-tyrosyl-tRNA(Tyr) + AMP + diphosphate + H(+). In terms of biological role, catalyzes the attachment of tyrosine to tRNA(Tyr) in a two-step reaction: tyrosine is first activated by ATP to form Tyr-AMP and then transferred to the acceptor end of tRNA(Tyr). In Bordetella avium (strain 197N), this protein is Tyrosine--tRNA ligase.